The chain runs to 913 residues: Alanine--tRNA ligase (913 aa).

Histidine 608, histidine 612, cysteine 711, and histidine 715 together coordinate Zn(2+).

Belongs to the class-II aminoacyl-tRNA synthetase family. Zn(2+) serves as cofactor.

Its subcellular location is the cytoplasm. It catalyses the reaction tRNA(Ala) + L-alanine + ATP = L-alanyl-tRNA(Ala) + AMP + diphosphate. In terms of biological role, catalyzes the attachment of alanine to tRNA(Ala) in a two-step reaction: alanine is first activated by ATP to form Ala-AMP and then transferred to the acceptor end of tRNA(Ala). Also edits incorrectly charged Ser-tRNA(Ala) and Gly-tRNA(Ala) via its editing domain. The chain is Alanine--tRNA ligase from Methanocorpusculum labreanum (strain ATCC 43576 / DSM 4855 / Z).